Here is a 358-residue protein sequence, read N- to C-terminus: Neutral protease 2 homolog MGYG_02351 (358 aa).

The signal sequence occupies residues 1–17 (MQFVALLAALGAPLALA). The propeptide occupies 18 to 183 (ASIPAAHNNS…DSPAGVIDKR (166 aa)). 2 cysteine pairs are disulfide-bonded: Cys191/Cys260 and Cys267/Cys285. His309 serves as a coordination point for Zn(2+). Glu310 is a catalytic residue. The Zn(2+) site is built by His313 and Asp324.

The protein belongs to the peptidase M35 family. It depends on Zn(2+) as a cofactor.

The protein resides in the secreted. It catalyses the reaction Preferential cleavage of bonds with hydrophobic residues in P1'. Also 3-Asn-|-Gln-4 and 8-Gly-|-Ser-9 bonds in insulin B chain.. Its function is as follows. Secreted metalloproteinase that allows assimilation of proteinaceous substrates. Shows high activities on basic nuclear substrates such as histone and protamine. May be involved in virulence. In Arthroderma gypseum (strain ATCC MYA-4604 / CBS 118893) (Microsporum gypseum), this protein is Neutral protease 2 homolog MGYG_02351.